Here is an 84-residue protein sequence, read N- to C-terminus: MSCCGGNCGCGSGCQCGGGCGGCKMFPDVEATATTKTFVLAAPSNKASSGGMEMAVESGENGGCGCNTCKCGTSCSGCSCCSCN.

It belongs to the metallothionein superfamily. Type 15 family.

It localises to the cytoplasm. It is found in the cytosol. Functionally, metallothioneins have a high content of cysteine residues that bind various heavy metals. Acts as a reactive oxygen species (ROS) scavenger in the cytosol. Possesses superoxide anion and hydroxyl radical scavenging activities in vitro. Plays a role during root development, lateral root initiation and seed embryo germination, possibly by regulating levels of cytokinin. This Oryza sativa subsp. indica (Rice) protein is Metallothionein-like protein 2C (MT2C).